The primary structure comprises 229 residues: PKHD-type hydroxylase RPD_3334 (229 aa).

One can recognise a Fe2OG dioxygenase domain in the interval 78–180; it reads QIFPPLFNRY…RVASFFWLQS (103 aa). Fe cation contacts are provided by histidine 98, aspartate 100, and histidine 161. Arginine 171 lines the 2-oxoglutarate pocket.

Fe(2+) serves as cofactor. Requires L-ascorbate as cofactor.

In Rhodopseudomonas palustris (strain BisB5), this protein is PKHD-type hydroxylase RPD_3334.